The sequence spans 596 residues: Probable lysosomal cobalamin transporter (596 aa).

10 helical membrane-spanning segments follow: residues 13 to 33 (IWVA…ITTF), 45 to 65 (VSIV…LLPV), 99 to 119 (VVYY…IPFA), 150 to 170 (LGFV…PAAG), 201 to 221 (LLIT…LALL), 318 to 338 (LLGG…MLIT), 353 to 373 (GYIL…VQSA), 381 to 401 (ILMA…IATI), 425 to 445 (IATV…AMIV), and 512 to 532 (VFGA…MVVF). N-linked (GlcNAc...) asparagine glycosylation is present at Asn-543. The interval 576 to 596 (GRAKNRNGYGTGGGEGSNGRG) is disordered. Over residues 584 to 596 (YGTGGGEGSNGRG) the composition is skewed to gly residues.

Belongs to the LIMR family. LMBRD1 subfamily.

The protein resides in the lysosome membrane. Probable lysosomal cobalamin transporter. Required to export cobalamin from lysosomes allowing its conversion to cofactors. The protein is Probable lysosomal cobalamin transporter of Podospora anserina (strain S / ATCC MYA-4624 / DSM 980 / FGSC 10383) (Pleurage anserina).